The primary structure comprises 147 residues: Hemoglobin subunit gamma (147 aa).

One can recognise a Globin domain in the interval 3–147; that stretch reads YFTAEEKAAI…VASALARKYH (145 aa). Residues His-64 and His-93 each coordinate heme b.

The protein belongs to the globin family. In terms of assembly, heterotetramer of two alpha chains and two gamma chains in fetal hemoglobin (Hb F). As to expression, red blood cells.

Its function is as follows. Gamma chains make up the fetal hemoglobin F, in combination with alpha chains. The polypeptide is Hemoglobin subunit gamma (HBG) (Dugong dugon (Dugong)).